The following is a 239-amino-acid chain: Uridylate kinase (239 aa).

13–16 contributes to the ATP binding site; it reads KVSG. Glycine 55 contributes to the UMP binding site. ATP contacts are provided by glycine 56 and arginine 60. UMP contacts are provided by residues aspartate 75 and 136–143; that span reads TGNPFFTT. ATP-binding residues include threonine 163, glutamine 164, tyrosine 169, and aspartate 172.

Belongs to the UMP kinase family. Homohexamer.

Its subcellular location is the cytoplasm. The enzyme catalyses UMP + ATP = UDP + ADP. Its pathway is pyrimidine metabolism; CTP biosynthesis via de novo pathway; UDP from UMP (UMPK route): step 1/1. With respect to regulation, inhibited by UTP. Its function is as follows. Catalyzes the reversible phosphorylation of UMP to UDP. The polypeptide is Uridylate kinase (Bartonella quintana (strain Toulouse) (Rochalimaea quintana)).